Consider the following 515-residue polypeptide: Bifunctional purine biosynthesis protein PurH (515 aa).

One can recognise an MGS-like domain in the interval 1–144; the sequence is MGRKALISVS…KNHKFVTIIV (144 aa).

Belongs to the PurH family.

The enzyme catalyses (6R)-10-formyltetrahydrofolate + 5-amino-1-(5-phospho-beta-D-ribosyl)imidazole-4-carboxamide = 5-formamido-1-(5-phospho-D-ribosyl)imidazole-4-carboxamide + (6S)-5,6,7,8-tetrahydrofolate. It carries out the reaction IMP + H2O = 5-formamido-1-(5-phospho-D-ribosyl)imidazole-4-carboxamide. It functions in the pathway purine metabolism; IMP biosynthesis via de novo pathway; 5-formamido-1-(5-phospho-D-ribosyl)imidazole-4-carboxamide from 5-amino-1-(5-phospho-D-ribosyl)imidazole-4-carboxamide (10-formyl THF route): step 1/1. It participates in purine metabolism; IMP biosynthesis via de novo pathway; IMP from 5-formamido-1-(5-phospho-D-ribosyl)imidazole-4-carboxamide: step 1/1. This Persephonella marina (strain DSM 14350 / EX-H1) protein is Bifunctional purine biosynthesis protein PurH.